The primary structure comprises 153 residues: CASP-like protein 5B1 (153 aa).

Over Met-1–Gln-20 the chain is Cytoplasmic. The helical transmembrane segment at Leu-21–Thr-41 threads the bilayer. Position 42 (Ala-42) is a topological domain, extracellular. The helical transmembrane segment at Phe-43–Leu-63 threads the bilayer. Over Asp-64–Ser-76 the chain is Cytoplasmic. Residues Ala-77–Ala-97 traverse the membrane as a helical segment. At Ser-98 to Ala-128 the chain is on the extracellular side. Residues Ile-129–Leu-149 form a helical membrane-spanning segment. Residues Leu-150–Leu-153 are Cytoplasmic-facing.

It belongs to the Casparian strip membrane proteins (CASP) family. Homodimer and heterodimers.

The protein localises to the cell membrane. The chain is CASP-like protein 5B1 from Oryza sativa subsp. indica (Rice).